The sequence spans 423 residues: MDRIVIQGGARLEGRIEISGAKNSALKLMAAALLTDEPVILTRMPRLADSRFLGHLLEKLGVEVSDGQDAQLRLHAATIADTFAPYDLVRKMRASFNVLGPLLAREGHARVSLPGGCAIGARPVDLHLKALKALGAQIEISEGYVSAKAPAGGLVGGEIDLPFASVGATEHAMLAASLARGETVIENAAREPEIGDLADCLTAMGATIEGAGSSTIRIQGQSRLSGVTHKVVADRIETATYALAVAAAGGDAVLEGAVLAHNKALWSSMGEAGVTVEAVADGVRVARNGSRLDSVDIETQPFPGFPTDAQAQFMALMSLANGSSVIRETIFENRFMHAPELARLGADITVHGNEAVVRGVERLRGAPVMATDLRASVSLVIAGLAAEGETVVNRVYHLDRGFERLEAKLTGCGARIERLPDGA.

A phosphoenolpyruvate-binding site is contributed by 22–23; it reads KN. Arg93 contributes to the UDP-N-acetyl-alpha-D-glucosamine binding site. The active-site Proton donor is Cys117. At Cys117 the chain carries 2-(S-cysteinyl)pyruvic acid O-phosphothioketal. UDP-N-acetyl-alpha-D-glucosamine is bound by residues 122–126, Asp308, and Ile330; that span reads RPVDL.

The protein belongs to the EPSP synthase family. MurA subfamily.

It localises to the cytoplasm. The enzyme catalyses phosphoenolpyruvate + UDP-N-acetyl-alpha-D-glucosamine = UDP-N-acetyl-3-O-(1-carboxyvinyl)-alpha-D-glucosamine + phosphate. It participates in cell wall biogenesis; peptidoglycan biosynthesis. Cell wall formation. Adds enolpyruvyl to UDP-N-acetylglucosamine. In Maricaulis maris (strain MCS10) (Caulobacter maris), this protein is UDP-N-acetylglucosamine 1-carboxyvinyltransferase.